Reading from the N-terminus, the 104-residue chain is Co-chaperonin GroES 2 (104 aa).

Belongs to the GroES chaperonin family. As to quaternary structure, heptamer of 7 subunits arranged in a ring. Interacts with the chaperonin GroEL.

It is found in the cytoplasm. Together with the chaperonin GroEL, plays an essential role in assisting protein folding. The GroEL-GroES system forms a nano-cage that allows encapsulation of the non-native substrate proteins and provides a physical environment optimized to promote and accelerate protein folding. GroES binds to the apical surface of the GroEL ring, thereby capping the opening of the GroEL channel. The chain is Co-chaperonin GroES 2 from Mesorhizobium japonicum (strain LMG 29417 / CECT 9101 / MAFF 303099) (Mesorhizobium loti (strain MAFF 303099)).